The sequence spans 293 residues: Acetylglutamate kinase (293 aa).

Substrate-binding positions include 71-72, Arg-93, and Asn-186; that span reads GG.

It belongs to the acetylglutamate kinase family. ArgB subfamily.

Its subcellular location is the cytoplasm. It catalyses the reaction N-acetyl-L-glutamate + ATP = N-acetyl-L-glutamyl 5-phosphate + ADP. Its pathway is amino-acid biosynthesis; L-arginine biosynthesis; N(2)-acetyl-L-ornithine from L-glutamate: step 2/4. Catalyzes the ATP-dependent phosphorylation of N-acetyl-L-glutamate. The polypeptide is Acetylglutamate kinase (Synechococcus sp. (strain WH7803)).